The primary structure comprises 76 residues: uncharacterized protein (76 aa).

This is an uncharacterized protein from Mycobacterium tuberculosis (strain ATCC 25618 / H37Rv).